A 318-amino-acid polypeptide reads, in one-letter code: Ribosomal RNA small subunit methyltransferase H (318 aa).

S-adenosyl-L-methionine-binding positions include 38 to 40, D58, Y86, D107, and Q114; that span reads GGH.

This sequence belongs to the methyltransferase superfamily. RsmH family.

Its subcellular location is the cytoplasm. It catalyses the reaction cytidine(1402) in 16S rRNA + S-adenosyl-L-methionine = N(4)-methylcytidine(1402) in 16S rRNA + S-adenosyl-L-homocysteine + H(+). Specifically methylates the N4 position of cytidine in position 1402 (C1402) of 16S rRNA. The polypeptide is Ribosomal RNA small subunit methyltransferase H (Methylibium petroleiphilum (strain ATCC BAA-1232 / LMG 22953 / PM1)).